A 596-amino-acid chain; its full sequence is Clathrin heavy chain linker domain-containing protein 1 (596 aa).

Residues 129-241 (QLEAKMRIIE…RDIAENLKKD (113 aa)) adopt a coiled-coil conformation.

The polypeptide is Clathrin heavy chain linker domain-containing protein 1 (Clhc1) (Mus musculus (Mouse)).